We begin with the raw amino-acid sequence, 125 residues long: Large ribosomal subunit protein bL12 (125 aa).

Belongs to the bacterial ribosomal protein bL12 family. In terms of assembly, homodimer. Part of the ribosomal stalk of the 50S ribosomal subunit. Forms a multimeric L10(L12)X complex, where L10 forms an elongated spine to which 2 to 4 L12 dimers bind in a sequential fashion. Binds GTP-bound translation factors.

Its function is as follows. Forms part of the ribosomal stalk which helps the ribosome interact with GTP-bound translation factors. Is thus essential for accurate translation. In Porphyromonas gingivalis (strain ATCC 33277 / DSM 20709 / CIP 103683 / JCM 12257 / NCTC 11834 / 2561), this protein is Large ribosomal subunit protein bL12.